The following is a 122-amino-acid chain: Large ribosomal subunit protein bL12 (122 aa).

The protein belongs to the bacterial ribosomal protein bL12 family. As to quaternary structure, homodimer. Part of the ribosomal stalk of the 50S ribosomal subunit. Forms a multimeric L10(L12)X complex, where L10 forms an elongated spine to which 2 to 4 L12 dimers bind in a sequential fashion. Binds GTP-bound translation factors.

In terms of biological role, forms part of the ribosomal stalk which helps the ribosome interact with GTP-bound translation factors. Is thus essential for accurate translation. The protein is Large ribosomal subunit protein bL12 of Buchnera aphidicola subsp. Baizongia pistaciae (strain Bp).